Reading from the N-terminus, the 170-residue chain is Small ribosomal subunit protein uS13 (170 aa).

Basic residues predominate over residues 128–140 (VRHKRGQKVRGQR). The interval 128 to 170 (VRHKRGQKVRGQRTKSTGRTEGTIGVNVEAIKEEQAEDGGDEE) is disordered.

It belongs to the universal ribosomal protein uS13 family. Part of the 30S ribosomal subunit. Forms a loose heterodimer with protein S19. Forms two bridges to the 50S subunit in the 70S ribosome.

Its function is as follows. Located at the top of the head of the 30S subunit, it contacts several helices of the 16S rRNA. In the 70S ribosome it contacts the 23S rRNA (bridge B1a) and protein L5 of the 50S subunit (bridge B1b), connecting the 2 subunits; these bridges are implicated in subunit movement. In Natronomonas pharaonis (strain ATCC 35678 / DSM 2160 / CIP 103997 / JCM 8858 / NBRC 14720 / NCIMB 2260 / Gabara) (Halobacterium pharaonis), this protein is Small ribosomal subunit protein uS13.